Consider the following 444-residue polypeptide: Cadaverine/lysine antiporter (444 aa).

Transmembrane regions (helical) follow at residues I7–L27, I35–Y55, I95–L115, I123–V143, I149–F169, I193–V213, L222–L242, L273–V293, L323–A343, L354–I374, F384–A404, and S405–R425.

It belongs to the amino acid-polyamine-organocation (APC) superfamily. Basic amino acid/polyamine antiporter (APA) (TC 2.A.3.2) family.

The protein resides in the cell inner membrane. The catalysed reaction is cadaverine(in) + L-lysine(out) = cadaverine(out) + L-lysine(in). Functionally, under acidic conditions, in the presence of lysine, functions as a cadaverine:lysine antiporter that facilitates the excretion of cadaverine and the uptake of lysine. The sequence is that of Cadaverine/lysine antiporter (cadB) from Escherichia coli O157:H7.